Reading from the N-terminus, the 228-residue chain is Sugar fermentation stimulation protein homolog (228 aa).

This sequence belongs to the SfsA family.

This Psychromonas ingrahamii (strain DSM 17664 / CCUG 51855 / 37) protein is Sugar fermentation stimulation protein homolog.